Consider the following 421-residue polypeptide: Medium-chain specific acyl-CoA dehydrogenase, mitochondrial (421 aa).

The transit peptide at 1–25 directs the protein to the mitochondrion; that stretch reads MAAMFRRSCRVLRSLSHFGWRSQHT. Lys79 is modified (N6-acetyllysine). Residue 158 to 167 coordinates FAD; that stretch reads YCVTEPGAGS. An octanoyl-CoA-binding site is contributed by Ser167. Lys179 is modified (N6-succinyllysine). 191-193 contacts FAD; it reads WIT. Lys212 carries the post-translational modification N6-acetyllysine; alternate. At Lys212 the chain carries N6-succinyllysine; alternate. Ser216 serves as a coordination point for octanoyl-CoA. N6-acetyllysine; alternate occurs at positions 217, 259, and 271. An N6-succinyllysine; alternate mark is found at Lys217, Lys259, and Lys271. Residue Asp278 coordinates octanoyl-CoA. Position 279 is an N6-acetyllysine (Lys279). Residue Arg281 participates in octanoyl-CoA binding. Lys301 is modified (N6-acetyllysine). Residues 306–308 and 316–317 contribute to the FAD site; these read RKT and HQ. Positions 349 and 351 each coordinate octanoyl-CoA. The residue at position 351 (Thr351) is a Phosphothreonine. 374-378 provides a ligand contact to FAD; it reads QVFGG. Glu401 is a binding site for octanoyl-CoA. Glu401 serves as the catalytic Proton acceptor. 402–405 is an FAD binding site; sequence GTAQ.

This sequence belongs to the acyl-CoA dehydrogenase family. Homotetramer. Interacts with the heterodimeric electron transfer flavoprotein ETF. FAD serves as cofactor. Post-translationally, acetylated. Could occur at proximity of the cofactor-binding sites and reduce the catalytic activity. Could be deacetylated by SIRT3.

It is found in the mitochondrion matrix. It catalyses the reaction a medium-chain 2,3-saturated fatty acyl-CoA + oxidized [electron-transfer flavoprotein] + H(+) = a medium-chain (2E)-enoyl-CoA + reduced [electron-transfer flavoprotein]. The enzyme catalyses pentanoyl-CoA + oxidized [electron-transfer flavoprotein] + H(+) = (2E)-pentenoyl-CoA + reduced [electron-transfer flavoprotein]. The catalysed reaction is hexanoyl-CoA + oxidized [electron-transfer flavoprotein] + H(+) = (2E)-hexenoyl-CoA + reduced [electron-transfer flavoprotein]. It carries out the reaction octanoyl-CoA + oxidized [electron-transfer flavoprotein] + H(+) = (2E)-octenoyl-CoA + reduced [electron-transfer flavoprotein]. It catalyses the reaction decanoyl-CoA + oxidized [electron-transfer flavoprotein] + H(+) = (2E)-decenoyl-CoA + reduced [electron-transfer flavoprotein]. The enzyme catalyses dodecanoyl-CoA + oxidized [electron-transfer flavoprotein] + H(+) = (2E)-dodecenoyl-CoA + reduced [electron-transfer flavoprotein]. The catalysed reaction is tetradecanoyl-CoA + oxidized [electron-transfer flavoprotein] + H(+) = (2E)-tetradecenoyl-CoA + reduced [electron-transfer flavoprotein]. It carries out the reaction oxidized [electron-transfer flavoprotein] + hexadecanoyl-CoA + H(+) = (2E)-hexadecenoyl-CoA + reduced [electron-transfer flavoprotein]. It participates in lipid metabolism; mitochondrial fatty acid beta-oxidation. Its function is as follows. Medium-chain specific acyl-CoA dehydrogenase is one of the acyl-CoA dehydrogenases that catalyze the first step of mitochondrial fatty acid beta-oxidation, an aerobic process breaking down fatty acids into acetyl-CoA and allowing the production of energy from fats. The first step of fatty acid beta-oxidation consists in the removal of one hydrogen from C-2 and C-3 of the straight-chain fatty acyl-CoA thioester, resulting in the formation of trans-2-enoyl-CoA. Electron transfer flavoprotein (ETF) is the electron acceptor that transfers electrons to the main mitochondrial respiratory chain via ETF-ubiquinone oxidoreductase (ETF dehydrogenase). Among the different mitochondrial acyl-CoA dehydrogenases, medium-chain specific acyl-CoA dehydrogenase acts specifically on acyl-CoAs with saturated 6 to 12 carbons long primary chains. This is Medium-chain specific acyl-CoA dehydrogenase, mitochondrial from Sus scrofa (Pig).